Here is a 143-residue protein sequence, read N- to C-terminus: Transcriptional regulator MraZ (143 aa).

SpoVT-AbrB domains are found at residues 5–47 (QYEH…SLEE) and 76–119 (AVEC…SKEV).

This sequence belongs to the MraZ family. Forms oligomers.

The protein localises to the cytoplasm. It is found in the nucleoid. The chain is Transcriptional regulator MraZ from Thermoanaerobacter sp. (strain X514).